A 2704-amino-acid polypeptide reads, in one-letter code: G surface protein, allelic form 168 (2704 aa).

The N-terminal stretch at 1-20 is a signal peptide; the sequence is MNNKFIIFSLLLALVASQTY. 31 PSA repeats span residues 112 to 165, 172 to 231, 238 to 297, 304 to 360, 400 to 460, 468 to 523, 530 to 590, 596 to 667, 683 to 742, 747 to 806, 815 to 881, 929 to 994, 1003 to 1061, 1069 to 1123, 1141 to 1196, 1214 to 1269, 1287 to 1342, 1360 to 1415, 1433 to 1495, 1503 to 1566, 1576 to 1641, 1684 to 1740, 1750 to 1807, 1817 to 1887, 1893 to 1965, 1974 to 2033, 2070 to 2137, 2145 to 2204, 2209 to 2274, 2348 to 2419, and 2424 to 2489; these read TLDS…NTCD, ATDK…RICD, TTDD…KTCA, TTNS…KTCA, TTND…DKTC, TTHD…KKQC, TTTH…KACS, FTTT…KSCA, FTFS…KTCA, TSHA…ATCA, DSDT…YALS, LTFA…AAEC, LDHS…FANC, LTNT…ACLT, LTNA…ACLT, LTDA…ACLT, LTDA…DVTC, LDHA…ATDC, ITYE…ATTC, NHTN…KTCD, DDTE…DLNC, DTHN…KSCT, TTTH…KSCA, DDDT…KSCD, ATDA…IKNC, TSEA…KDCQ, TTHA…YTSC, YTTH…QSCA, and TTHA…LTCA.

It localises to the cell membrane. In terms of biological role, this protein is the surface antigen or immobilization antigen of Paramecium primaurelia. The chain is G surface protein, allelic form 168 (168G) from Paramecium primaurelia.